A 1372-amino-acid polypeptide reads, in one-letter code: Serine protease pic autotransporter (1372 aa).

Positions 1–55 are cleaved as a signal peptide; sequence MNKVYSLKYCPVTGGLIAVSELARRVIKKTCRRLTHILLAGIPAICLCYSQISQA. Positions 56–301 constitute a Peptidase S6 domain; sequence GIVRSDIAYQ…NVIPTDYLNQ (246 aa). Residues H127, D155, and S258 each act as charge relay system in the active site. The region spanning 1106 to 1372 is the Autotransporter domain; that stretch reads DTNGDAGAWA…AVNANFRYMF (267 aa).

Cleaved to release the mature protein from the outer membrane.

Its subcellular location is the periplasm. It is found in the secreted. The protein localises to the cell surface. It localises to the cell outer membrane. In terms of biological role, involved in intestinal colonization, displays in vitro mucinolytic activity, serum resistance, and hemagglutination. Important to penetrate the intestinal mucus layer. This is Serine protease pic autotransporter (pic) from Shigella flexneri.